Consider the following 461-residue polypeptide: NADH-ubiquinone oxidoreductase chain 4 (461 aa).

A run of 13 helical transmembrane segments spans residues proline 20–leucine 42, proline 61–serine 81, glutamine 93–alanine 113, threonine 114–isoleucine 134, glycine 147–methionine 167, tryptophan 197–leucine 217, proline 225–methionine 245, leucine 258–leucine 278, serine 285–threonine 304, glycine 309–alanine 331, valine 351–proline 371, threonine 393–leucine 413, and leucine 436–tryptophan 456.

Belongs to the complex I subunit 4 family.

The protein localises to the mitochondrion membrane. It carries out the reaction a ubiquinone + NADH + 5 H(+)(in) = a ubiquinol + NAD(+) + 4 H(+)(out). In terms of biological role, core subunit of the mitochondrial membrane respiratory chain NADH dehydrogenase (Complex I) that is believed to belong to the minimal assembly required for catalysis. Complex I functions in the transfer of electrons from NADH to the respiratory chain. The immediate electron acceptor for the enzyme is believed to be ubiquinone. This Latimeria chalumnae (Coelacanth) protein is NADH-ubiquinone oxidoreductase chain 4 (MT-ND4).